Here is a 400-residue protein sequence, read N- to C-terminus: Tryptophan synthase beta chain (400 aa).

Lys-91 is subject to N6-(pyridoxal phosphate)lysine.

It belongs to the TrpB family. As to quaternary structure, tetramer of two alpha and two beta chains. The cofactor is pyridoxal 5'-phosphate.

It catalyses the reaction (1S,2R)-1-C-(indol-3-yl)glycerol 3-phosphate + L-serine = D-glyceraldehyde 3-phosphate + L-tryptophan + H2O. It participates in amino-acid biosynthesis; L-tryptophan biosynthesis; L-tryptophan from chorismate: step 5/5. In terms of biological role, the beta subunit is responsible for the synthesis of L-tryptophan from indole and L-serine. This is Tryptophan synthase beta chain from Listeria monocytogenes serovar 1/2a (strain ATCC BAA-679 / EGD-e).